Consider the following 68-residue polypeptide: MKLEEIKKFVAELRGLSQEELAKKENELKKELFDLRFQAAAGQLDQTARLNEVKKQIARVKTVQSEMK.

The protein belongs to the universal ribosomal protein uL29 family.

This is Large ribosomal subunit protein uL29 from Streptococcus uberis (strain ATCC BAA-854 / 0140J).